The sequence spans 757 residues: Transferrin receptor protein 1 (757 aa).

Residues 1–67 are Cytoplasmic-facing; sequence MMDQARSAIS…KHRRLNGRLC (67 aa). The segment at 1-67 is mediates interaction with SH3BP4; it reads MMDQARSAIS…KHRRLNGRLC (67 aa). S10 and S19 each carry phosphoserine. Y20 carries the phosphotyrosine modification. Residues 20-23 carry the Endocytosis signal motif; that stretch reads YTRF. Position 21 is a phosphothreonine (T21). Phosphoserine is present on S24. Positions 58–61 match the Stop-transfer sequence motif; it reads KHRR. The S-palmitoyl cysteine moiety is linked to residue C67. The helical; Signal-anchor for type II membrane protein transmembrane segment at 68–88 threads the bilayer; that stretch reads FGTIAVVIFFLIGFMIGYLGY. Residues 89–757 are Extracellular-facing; that stretch reads CKRTEQKDCV…GDIWDIDNEF (669 aa). The O-linked (GalNAc...) threonine glycan is linked to T103. The region spanning 220-310 is the PA domain; it reads SKATTVSGKL…GTGDPYTPGF (91 aa). Residues N248 and N314 are each glycosylated (N-linked (GlcNAc...) asparagine). The segment at 566–757 is ligand-binding; the sequence is NLDTYEKLIQ…GDIWDIDNEF (192 aa). A Cell attachment site motif is present at residues 643-645; it reads RGD. N719 and N724 each carry an N-linked (GlcNAc...) asparagine glycan.

This sequence belongs to the peptidase M28 family. M28B subfamily. As to quaternary structure, homodimer; disulfide-linked. Binds one transferrin molecule per subunit. Interacts with SH3BP4. Interacts with STEAP3; facilitates TFRC endocytosis in erythroid precursor cells. Stearoylated by ZDHHC6 which inhibits TFRC-mediated activation of the JNK pathway and promotes mitochondrial fragmentation. Stearoylation does not affect iron uptake. In terms of processing, N- and O-glycosylated, phosphorylated and palmitoylated.

It is found in the cell membrane. The protein resides in the melanosome. Its function is as follows. Cellular uptake of iron occurs via receptor-mediated endocytosis of ligand-occupied transferrin receptor into specialized endosomes. Endosomal acidification leads to iron release. The apotransferrin-receptor complex is then recycled to the cell surface with a return to neutral pH and the concomitant loss of affinity of apotransferrin for its receptor. Transferrin receptor is necessary for development of erythrocytes and the nervous system. Positively regulates T and B cell proliferation through iron uptake. Acts as a lipid sensor that regulates mitochondrial fusion by regulating activation of the JNK pathway. When dietary levels of stearate (C18:0) are low, promotes activation of the JNK pathway, resulting in HUWE1-mediated ubiquitination and subsequent degradation of the mitofusin MFN2 and inhibition of mitochondrial fusion. When dietary levels of stearate (C18:0) are high, TFRC stearoylation inhibits activation of the JNK pathway and thus degradation of the mitofusin MFN2. Mediates uptake of NICOL1 into fibroblasts where it may regulate extracellular matrix production. The sequence is that of Transferrin receptor protein 1 (TFRC) from Cricetulus griseus (Chinese hamster).